The chain runs to 202 residues: MEKDFFRKNGIDLAKSILGKYLIRKYENKVIVTKIIETEAYMGVNDKGAHVYGNKKTDRTKPLYLDGGHIYVYLIYGMYNCLNLSANIENVPECVLIRGVEPITSLDEISMNRYNKAYTELSKYQVKNITNGPGKLCKALKIDRSLNSKSIMGEELYISDFYYDDKGKKVFSKDELDIKTSKRINIDYAEEAKDFLWRFYIE.

The protein belongs to the DNA glycosylase MPG family.

The chain is Putative 3-methyladenine DNA glycosylase from Clostridioides difficile (strain 630) (Peptoclostridium difficile).